A 252-amino-acid chain; its full sequence is tRNA (guanine-N(1)-)-methyltransferase (252 aa).

S-adenosyl-L-methionine contacts are provided by residues G113 and 133 to 138 (IGDYVL). Over residues 229 to 238 (VARPAANAPA) the composition is skewed to low complexity. A disordered region spans residues 229–252 (VARPAANAPAKGESQKTPKNKTDG). Positions 241-252 (ESQKTPKNKTDG) are enriched in basic and acidic residues.

Belongs to the RNA methyltransferase TrmD family. As to quaternary structure, homodimer.

It localises to the cytoplasm. It carries out the reaction guanosine(37) in tRNA + S-adenosyl-L-methionine = N(1)-methylguanosine(37) in tRNA + S-adenosyl-L-homocysteine + H(+). In terms of biological role, specifically methylates guanosine-37 in various tRNAs. The protein is tRNA (guanine-N(1)-)-methyltransferase of Rhodopseudomonas palustris (strain HaA2).